Reading from the N-terminus, the 299-residue chain is Syntenin-1 (299 aa).

Position 2 is an N-acetylserine (S2). Positions 2-103 (SLYPSLEDLK…VAPVTGNDAG (102 aa)) are interaction with PDCD6IP. Short sequence motifs (LYPX(n)L motif) lie at residues 3 to 7 (LYPSL), 46 to 50 (LYPKL), and 50 to 54 (LYPEL). S6 is modified (phosphoserine). The residue at position 47 (Y47) is a Phosphotyrosine. 2 consecutive PDZ domains span residues 115–194 (EVIL…IRDR) and 199–273 (TVTM…IMPT). 251-252 (KD) contacts a 1,2-diacyl-sn-glycero-3-phospho-(1D-myo-inositol-4,5-bisphosphate).

In terms of assembly, monomer and homodimer. Interacts with SDC1, SDC2, SDC3, SDC4, NRXN2, EPHA7, EPHB1, NF2 isoform 1, TGFA, IL5RA, NFASC, SDCBP2 and PTPRJ. Interacts with PDCD6IP. Forms a complex with PDCD6IP and SDC2. Interacts (via C-terminus) with TGFBR1. Binds to FZD7; this interaction is increased by inositol trisphosphate (IP3). Interacts with SMO. In terms of processing, phosphorylated on tyrosine residues.

The protein resides in the cell junction. Its subcellular location is the focal adhesion. The protein localises to the adherens junction. It localises to the cell membrane. It is found in the endoplasmic reticulum membrane. The protein resides in the nucleus. Its subcellular location is the melanosome. The protein localises to the cytoplasm. It localises to the cytosol. It is found in the cytoskeleton. The protein resides in the secreted. Its subcellular location is the extracellular exosome. The protein localises to the membrane raft. In terms of biological role, multifunctional adapter protein involved in diverse array of functions including trafficking of transmembrane proteins, neuro and immunomodulation, exosome biogenesis, and tumorigenesis. Positively regulates TGFB1-mediated SMAD2/3 activation and TGFB1-induced epithelial-to-mesenchymal transition (EMT) and cell migration in various cell types. May increase TGFB1 signaling by enhancing cell-surface expression of TGFR1 by preventing the interaction between TGFR1 and CAV1 and subsequent CAV1-dependent internalization and degradation of TGFR1. In concert with SDC1/4 and PDCD6IP, regulates exosome biogenesis. Regulates migration, growth, proliferation, and cell cycle progression in a variety of cancer types. In adherens junctions may function to couple syndecans to cytoskeletal proteins or signaling components. Seems to couple transcription factor SOX4 to the IL-5 receptor (IL5RA). May also play a role in vesicular trafficking. Seems to be required for the targeting of TGFA to the cell surface in the early secretory pathway. The sequence is that of Syntenin-1 (Sdcbp) from Mus musculus (Mouse).